Reading from the N-terminus, the 162-residue chain is Cytochrome c-type biogenesis protein CcmE (162 aa).

Residues 1–13 lie on the Cytoplasmic side of the membrane; that stretch reads MSFWPQSRKARRR. A helical; Signal-anchor for type II membrane protein transmembrane segment spans residues 14–34; it reads LTILLAIAPVLALAVGLALYG. Over 35–162 the chain is Periplasmic; the sequence is LRDSISLFYT…DAPAYGSQKP (128 aa). Residues His128 and Tyr132 each coordinate heme. Residues 140-151 show a composition bias toward basic and acidic residues; the sequence is ALKEQGEWRGEG. The tract at residues 140–162 is disordered; sequence ALKEQGEWRGEGADAPAYGSQKP.

The protein belongs to the CcmE/CycJ family.

The protein localises to the cell inner membrane. Heme chaperone required for the biogenesis of c-type cytochromes. Transiently binds heme delivered by CcmC and transfers the heme to apo-cytochromes in a process facilitated by CcmF and CcmH. The polypeptide is Cytochrome c-type biogenesis protein CcmE (Caulobacter vibrioides (strain ATCC 19089 / CIP 103742 / CB 15) (Caulobacter crescentus)).